A 435-amino-acid chain; its full sequence is MDSFEHLRPEDSQSVVSRMQKKYWKTKQVFIKATGKKEDEHVVASDAELDAKLEVFHSIQETCNELVKAVEKYQLRLNVISEEENELGLFLTFQAERDATQAGKMMGAAGKALCSSAKQRLALCTPLSRLKQEVATFSQRAISDTSVTINRMERARTEYRGALLWMKDASQELDPDTFKQVEKFRKVQIQVRNSKDCFDKLKMDVCQKVDLLGASRCNMLSHSLATYQRTLLGFWEKTAQMMSQIQEACAGFHPYDFMALKQLQDTPGNLTAEDKEEQTEGSCLSTNLNKVALSEEEERFEREPAVARALPRDSLEGDDFEKEFSFLSSLLSPTSSRASECTQECQPACGSPSLMCQEPSLGPGPLTSSSQFLPSRLFDLGLHADGAFNSWASQEGSEHSDTLPVPSQHPKKLKYLGPLSNPDAIGHSDDELLNA.

An AH domain is found at 44 to 247 (ASDAELDAKL…TAQMMSQIQE (204 aa)). The segment at 391-435 (WASQEGSEHSDTLPVPSQHPKKLKYLGPLSNPDAIGHSDDELLNA) is disordered. Over residues 426–435 (GHSDDELLNA) the composition is skewed to basic and acidic residues.

This is Islet cell autoantigen 1-like protein (Ica1l) from Rattus norvegicus (Rat).